The chain runs to 509 residues: 5-OH-xanthotoxin synthase (509 aa).

The chain crosses the membrane as a helical span at residues 5–25 (AVVILLILAFPIASVYVLFYH). The substrate specificity stretch occupies residues 368–373 (TGALLI). Position 449 (Cys449) interacts with heme.

The protein belongs to the cytochrome P450 family. Heme is required as a cofactor.

It is found in the microsome membrane. It carries out the reaction xanthotoxin + reduced [NADPH--hemoprotein reductase] + O2 = 5-hydroxyxanthotoxin + oxidized [NADPH--hemoprotein reductase] + H2O + 2 H(+). It participates in secondary metabolite biosynthesis. Involved in the biosynthesis of coumarins and furanocoumarins (FCs), natural products required for defense responses against attacks by predators with potential medical and agroindustrial usages such as anticoagulant, rodenticide and artificial vanilla substitutes. Catalyzes the conversion of xanthotoxin into 5-hydroxyxanthotoxin. This Ammi majus (Bishop's weed) protein is 5-OH-xanthotoxin synthase.